Consider the following 155-residue polypeptide: Small ribosomal subunit protein uS7cz/uS7cy (155 aa).

This sequence belongs to the universal ribosomal protein uS7 family. Part of the 30S ribosomal subunit.

Its subcellular location is the plastid. The protein localises to the chloroplast. In terms of biological role, one of the primary rRNA binding proteins, it binds directly to 16S rRNA where it nucleates assembly of the head domain of the 30S subunit. The chain is Small ribosomal subunit protein uS7cz/uS7cy (rps7-A) from Psilotum nudum (Whisk fern).